A 292-amino-acid polypeptide reads, in one-letter code: MLNYDKMEKIGEGTYGTVFKARNKNSGEIVALKRVRLDDDDEGVPSSALREICILRELKHRNVVRLYDVVHSENKLTLVFEYCDQDLKKFFDSLNGYMDAQTARSLMLQLLRGLSFCHAHHVLHRDLKPQNLLINTNGTLKLADFGLARAFGVPVRCFSAEVVTLWYRPPDVLFGAKLYNTSIDMWSAGCIFAEISNAGRPLFPGADVDDQLKRIFKQLGSPSEDNWPSITQLPDYKPYPIYHPTLTWSQIVPNLNSRGRDLLQKLLVCNPAGRIDADAALRHAYFADTSDV.

The Protein kinase domain maps to 4–286; sequence YDKMEKIGEG…ADAALRHAYF (283 aa). ATP contacts are provided by residues 10 to 18 and Lys33; that span reads IGEGTYGTV. The active-site Proton acceptor is the Asp126. 2 residues coordinate Mg(2+): Asn131 and Asp144.

It belongs to the protein kinase superfamily. CMGC Ser/Thr protein kinase family. CDC2/CDKX subfamily. Heterodimer composed of a catalytic subunit cdk-5 and a regulatory subunit cdka-1. Interaction with cdka-1 is required for cdk-5 activation. It depends on Mg(2+) as a cofactor.

Its subcellular location is the cytoplasm. It is found in the cell projection. It localises to the dendrite. It carries out the reaction L-seryl-[protein] + ATP = O-phospho-L-seryl-[protein] + ADP + H(+). It catalyses the reaction L-threonyl-[protein] + ATP = O-phospho-L-threonyl-[protein] + ADP + H(+). In terms of biological role, proline-directed serine/threonine-protein kinase which, in several motor neurons, promotes the polarized trafficking of synaptic vesicles and dense-core vesicles (DCV). In the ventral nerve cord, phosphorylates lin-10 and thereby prevents lin-10-mediated anterograde trafficking of the glutamate receptor glr-1. Involved in the inhibition of glr-1 trafficking in hypoxic conditions. In DA motor neurons but not in DB motor neurons, regulates axonal transport of synaptic vesicle precursors by inhibiting dynein-mediated retrograde transport. Regulates the trafficking of dense-core vesicles in DA and DB motor neurons by promoting anterograde trafficking to the axon and preventing dynein-dependent trafficking to the dendrite. May regulate these processes in association with cdka-1/p35. Activity may be regulated by cyy-1. Involved in synapse formation during DD motor neuron remodeling by regulating transport of disassembled synaptic material to the new synaptic sites probably by activating the motor protein unc-104/kinesin-3. Regulates microtubule polarity in the dendrite of DB motor neurons. May also play a role in GABAergic synaptic vesicle localization in the ventral nerve cord. In Caenorhabditis elegans, this protein is Cyclin-dependent-like kinase 5.